Here is a 438-residue protein sequence, read N- to C-terminus: Innexin inx7 (438 aa).

The Cytoplasmic portion of the chain corresponds to 1-23 (MLNTFSSVRQYLKFDLTRVVIDN). The helical transmembrane segment at 24-44 (IVFKLHYRWTFVILLVATLLI) threads the bilayer. The Extracellular portion of the chain corresponds to 45–58 (TSRQYIGEHIQCLS). Residues 59-79 (DGVVSPVINTFCFFTPTFTVV) traverse the membrane as a helical segment. Over 80–112 (RDQNQTAYRPGSEPPGIGAFDPEKDTIKRHAYY) the chain is Cytoplasmic. Residues 113–133 (QWVPFVLFFQALCFYIPHALW) form a helical membrane-spanning segment. Residues 134 to 283 (KSWEGGRIKA…VMALNIMNEK (150 aa)) lie on the Extracellular side of the membrane. The helical transmembrane segment at 284 to 304 (IYIILWFWYAFLLIVTVLGLL) threads the bilayer. Topologically, residues 305–438 (WRILTLCFYR…STSDMAKLPV (134 aa)) are cytoplasmic. Disordered stretches follow at residues 381–402 (NDVN…PELS) and 415–438 (RRNG…KLPV). Low complexity predominate over residues 418–431 (GSPSAGGAQGPSTS).

It belongs to the pannexin family. Expressed around gut lobes in embryonic stages 15-17.

Its subcellular location is the cell membrane. The protein resides in the cell junction. It localises to the gap junction. Its function is as follows. Structural components of the gap junctions. This chain is Innexin inx7 (Inx7), found in Drosophila melanogaster (Fruit fly).